A 191-amino-acid chain; its full sequence is Probable nicotinate-nucleotide adenylyltransferase (191 aa).

The protein belongs to the NadD family.

The enzyme catalyses nicotinate beta-D-ribonucleotide + ATP + H(+) = deamido-NAD(+) + diphosphate. Its pathway is cofactor biosynthesis; NAD(+) biosynthesis; deamido-NAD(+) from nicotinate D-ribonucleotide: step 1/1. Its function is as follows. Catalyzes the reversible adenylation of nicotinate mononucleotide (NaMN) to nicotinic acid adenine dinucleotide (NaAD). The chain is Probable nicotinate-nucleotide adenylyltransferase from Staphylococcus epidermidis (strain ATCC 12228 / FDA PCI 1200).